We begin with the raw amino-acid sequence, 220 residues long: Adenylate kinase (220 aa).

An ATP-binding site is contributed by 10–15; sequence GAGKGT. Residues 30 to 59 form an NMP region; it reads STGDLFRANISQQTELGKLAKSYMDEGNLV. AMP is bound by residues Thr-31, Arg-36, 57 to 59, 85 to 88, and Gln-92; these read NLV and GFPR. Residues 126 to 164 are LID; that stretch reads GRRICRNDSAHVFHVSYKPPKQEGVCDVCGGELYQRDDD. ATP is bound by residues Arg-127 and 137–138; that span reads VF. Arg-161 and Arg-172 together coordinate AMP. Gly-200 contacts ATP.

This sequence belongs to the adenylate kinase family. Monomer.

The protein resides in the cytoplasm. It carries out the reaction AMP + ATP = 2 ADP. It participates in purine metabolism; AMP biosynthesis via salvage pathway; AMP from ADP: step 1/1. Functionally, catalyzes the reversible transfer of the terminal phosphate group between ATP and AMP. Plays an important role in cellular energy homeostasis and in adenine nucleotide metabolism. The protein is Adenylate kinase of Streptomyces avermitilis (strain ATCC 31267 / DSM 46492 / JCM 5070 / NBRC 14893 / NCIMB 12804 / NRRL 8165 / MA-4680).